The sequence spans 164 residues: Outer membrane protein assembly factor BamE (164 aa).

The signal sequence occupies residues 1–19; sequence MHAFFPRLLLLLLFLPLTH. The segment at 111–164 is disordered; sequence PAFSESEPAQNFFSPEQTFTPAPDTDSNMNEEPDKKGTVNFLKENQTNFYKDNQ. Polar residues-rich tracts occupy residues 117-140 and 153-164; these read EPAQNFFSPEQTFTPAPDTDSNMN and KENQTNFYKDNQ.

It belongs to the BamE family. In terms of assembly, part of the Bam complex.

It localises to the cell outer membrane. Its function is as follows. Part of the outer membrane protein assembly complex, which is involved in assembly and insertion of beta-barrel proteins into the outer membrane. The protein is Outer membrane protein assembly factor BamE of Nitrosomonas europaea (strain ATCC 19718 / CIP 103999 / KCTC 2705 / NBRC 14298).